The primary structure comprises 460 residues: MSIDIKFTINDILFNQESLQKKNKYTCPICFEFIYKKQIYQCKSGHHACKECWEKSLETKKECMTCKSVVNSYNDLSRCLMVERAFDKKECCCIYSFNEQIVEGGTNCSPPDGASDQNQRKLIKDEENGCKEKIEVDQIDSHLINCQYKFVTCSFKGCEKILRMNSLESHQNECGFKLVTCDFCKRDDIKKKELETHYKTCPMVPIDCSQGCSVKIERKSIIDHIENDCCNTQIPCKYFEQGCKVEMKRSELQNHLERVNHQNYMGILIEKLTNQVGQSKKTHDELLKKIEDLSLLVIKFSDACLKKQVLPKALDICSNGYRNKWIISNYSSVAKSKLNCQALSSPMLSILSHLFQVCVYPKGDENKEYISLYLRVNNIEEPNSLKVEYSFTLVNVLDKSKSITKKEDKKVFISSEGWGWGKFLLSDLINKENGWLSNDDKLIIEIYIKILNEEYEPLES.

An RING-type zinc finger spans residues 27–67; sequence CPICFEFIYKKQIYQCKSGHHACKECWEKSLETKKECMTCK. TRAF-type zinc fingers lie at residues 141–194 and 196–253; these read SHLI…KKEL and THYK…SELQ. Residues 269–294 are a coiled coil; sequence IEKLTNQVGQSKKTHDELLKKIEDLS. In terms of domain architecture, MATH spans 320 to 448; it reads GYRNKWIISN…DDKLIIEIYI (129 aa).

Belongs to the TNF receptor-associated factor family. A subfamily.

The protein resides in the cytoplasm. Its function is as follows. Probable adapter protein and signal transducer that links members of the tumor necrosis factor receptor family to different signaling pathways by association with the receptor cytoplasmic domain and kinases. The sequence is that of RING finger protein DG17 (zfaA) from Dictyostelium discoideum (Social amoeba).